The chain runs to 216 residues: Somatotropin (216 aa).

Positions 1–26 (MAAGPRNSMLLVFALLSLPWPQEVGA) are cleaved as a signal peptide. Histidine 45 provides a ligand contact to Zn(2+). A disulfide bond links cysteine 78 and cysteine 189. At serine 131 the chain carries Phosphoserine. Glutamate 198 is a binding site for Zn(2+). The cysteines at positions 206 and 214 are disulfide-linked.

It belongs to the somatotropin/prolactin family.

The protein resides in the secreted. Plays an important role in growth control. Its major role in stimulating body growth is to stimulate the liver and other tissues to secrete IGF1. It stimulates both the differentiation and proliferation of myoblasts. It also stimulates amino acid uptake and protein synthesis in muscle and other tissues. This Neovison vison (American mink) protein is Somatotropin (GH1).